Here is a 197-residue protein sequence, read N- to C-terminus: dTTP/UTP pyrophosphatase (197 aa).

The active-site Proton acceptor is D70.

This sequence belongs to the Maf family. YhdE subfamily. The cofactor is a divalent metal cation.

Its subcellular location is the cytoplasm. It catalyses the reaction dTTP + H2O = dTMP + diphosphate + H(+). The catalysed reaction is UTP + H2O = UMP + diphosphate + H(+). In terms of biological role, nucleoside triphosphate pyrophosphatase that hydrolyzes dTTP and UTP. May have a dual role in cell division arrest and in preventing the incorporation of modified nucleotides into cellular nucleic acids. The chain is dTTP/UTP pyrophosphatase (yceF) from Shigella dysenteriae serotype 1 (strain Sd197).